We begin with the raw amino-acid sequence, 354 residues long: MGCATSAEDKAAAERSKAIDRNLRIDGEKAAREVKLLLLGAGESGKSTIVKQMKIIHEEGYSEEDCKQYKPVVYSNTIQSMIAIIRAMGSLKVDFGDGDRTDDARQLFALAGQAEEGELSPELAAVMKRLWADGGVQGCFSRSREYQLNDSASYYLNALDRLAAPGYIPTQQDVLRTRVKTTGIVETHFTFKDLHFKMFDVGGQRSERKKWIHCFEGVTAIIFCVALSAYDLVLAEDEEMNRMHESMKLFDSICNNKWFTETSIILFLNKKDLFEEKITKSPLTICFPEYTGSNTYEEAAAYIQMQFEDLNKRKDQKEIYTHFTCATDTNNIQFVFDAVTDVIIKNNLKDCGLF.

Glycine 2 is lipidated: N-myristoyl glycine. Cysteine 3 carries S-palmitoyl cysteine lipidation. The region spanning 32–354 is the G-alpha domain; that stretch reads REVKLLLLGA…KNNLKDCGLF (323 aa). The G1 motif stretch occupies residues 35 to 48; the sequence is KLLLLGAGESGKST. Residues 40–47, 175–181, 200–204, 269–272, and alanine 326 contribute to the GTP site; these read GAGESGKS, LRTRVKT, DVGGQ, and NKKD. 2 residues coordinate Mg(2+): serine 47 and threonine 181. Positions 173–181 are G2 motif; the sequence is DVLRTRVKT. The G3 motif stretch occupies residues 196-205; that stretch reads FKMFDVGGQR. Residues 265 to 272 form a G4 motif region; the sequence is ILFLNKKD. The segment at 324–329 is G5 motif; the sequence is TCATDT.

Belongs to the G-alpha family. G(i/o/t/z) subfamily. As to quaternary structure, g proteins are composed of 3 units; alpha, beta and gamma. The alpha chain contains the guanine nucleotide binding site.

In terms of biological role, guanine nucleotide-binding proteins (G proteins) are involved as modulators or transducers in various transmembrane signaling systems. This G protein is involved in 1-methyladenine-induced oocyte maturation. This is Guanine nucleotide-binding protein G(i) subunit alpha from Patiria pectinifera (Starfish).